Here is a 290-residue protein sequence, read N- to C-terminus: Metallo-beta-lactamase L1 type 3 (290 aa).

An N-terminal signal peptide occupies residues 1 to 21 (MRSTLLAFALAVALPAAHTSA). Positions 22–33 (AEVPLPQLRAYT) are excised as a propeptide. Zn(2+)-binding residues include His105, His107, Asp109, His110, and His181. Position 205 (Asp205) interacts with substrate. A disulfide bond links Cys239 and Cys267. His246 provides a ligand contact to Zn(2+).

It belongs to the metallo-beta-lactamase superfamily. Class-B beta-lactamase family. In terms of assembly, homotetramer. The cofactor is Zn(2+).

The protein localises to the periplasm. It carries out the reaction a beta-lactam + H2O = a substituted beta-amino acid. With respect to regulation, inhibited by Hg(2+) or Cu(2+), and by chelating agents such as EDTA and O-phenanthroline. Reduced enzymatic activity in presence of cobalt, nickel, cadmium, and manganese. Functionally, confers resistance to the different beta-lactams antibiotics (penicillin, cephalosporin and carbapenem) via the hydrolysis of the beta-lactam ring. This chain is Metallo-beta-lactamase L1 type 3, found in Stenotrophomonas maltophilia (Pseudomonas maltophilia).